A 311-amino-acid chain; its full sequence is Acetyl-coenzyme A carboxylase carboxyl transferase subunit alpha (311 aa).

Residues 32–289 (ELNLLEERLR…KSVLEQKLAQ (258 aa)) enclose the CoA carboxyltransferase C-terminal domain.

Belongs to the AccA family. In terms of assembly, acetyl-CoA carboxylase is a heterohexamer composed of biotin carboxyl carrier protein (AccB), biotin carboxylase (AccC) and two subunits each of ACCase subunit alpha (AccA) and ACCase subunit beta (AccD).

Its subcellular location is the cytoplasm. The enzyme catalyses N(6)-carboxybiotinyl-L-lysyl-[protein] + acetyl-CoA = N(6)-biotinyl-L-lysyl-[protein] + malonyl-CoA. Its pathway is lipid metabolism; malonyl-CoA biosynthesis; malonyl-CoA from acetyl-CoA: step 1/1. Its function is as follows. Component of the acetyl coenzyme A carboxylase (ACC) complex. First, biotin carboxylase catalyzes the carboxylation of biotin on its carrier protein (BCCP) and then the CO(2) group is transferred by the carboxyltransferase to acetyl-CoA to form malonyl-CoA. This Exiguobacterium sibiricum (strain DSM 17290 / CCUG 55495 / CIP 109462 / JCM 13490 / 255-15) protein is Acetyl-coenzyme A carboxylase carboxyl transferase subunit alpha.